A 254-amino-acid chain; its full sequence is MTSTDNDNILYEYPLQERMRTYLRLEHGFEQLKASRVCFDEQAEPFFNALFAVTELLERCDIRTELTKDLELDKQRLQKWEEHPDVDRDALQRTISEIEHCINTLQDIPKYLRQLKDDALLTSIRQRFSQPGMSGLFELPQLHLWLSQSAEEKQQQCERWSQTLALVELAITLKLTLLREQSVFAPIQLQNGFLQESSEQLLAMLRIKVPRSAKIYPVISGHRQRFTVRFMPLPGESKETSLHDIEFELARCSP.

Belongs to the ZapD family. As to quaternary structure, interacts with FtsZ.

The protein localises to the cytoplasm. Its function is as follows. Cell division factor that enhances FtsZ-ring assembly. Directly interacts with FtsZ and promotes bundling of FtsZ protofilaments, with a reduction in FtsZ GTPase activity. The sequence is that of Cell division protein ZapD from Idiomarina loihiensis (strain ATCC BAA-735 / DSM 15497 / L2-TR).